The chain runs to 1442 residues: ABC transporter G family member 11 (1442 aa).

The region spanning 125-373 is the ABC transporter 1 domain; that stretch reads LFTPSFWTKK…FMSLGFDCEP (249 aa). In terms of domain architecture, ABC transmembrane type-2 1 spans 478–718; the sequence is LNDKFGMYSK…EQGSLYFKGD (241 aa). 6 consecutive transmembrane segments (helical) span residues 482-502, 518-538, 567-587, 592-612, 627-647, and 737-757; these read FGMY…ASLF, AILS…AMTF, IPFT…MFGL, GKFF…TALF, NISN…IPIP, and IIVY…MEYI. The region spanning 808–1052 is the ABC transporter 2 domain; it reads FTWQNIRYTV…LTSYFERHGV (245 aa). Residue 844 to 851 participates in ATP binding; that stretch reads GSSGAGKT. In terms of domain architecture, ABC transmembrane type-2 2 spans 1144-1369; the sequence is YYTYGSFVQA…YNTCQNYTSA (226 aa). Helical transmembrane passes span 1147–1167, 1181–1201, 1220–1240, 1259–1279, 1286–1306, and 1416–1436; these read YGSF…FWNL, IFEA…QLII, FAIS…TIFF, FYFW…GQAV, MFFA…FCGV, and VGII…FVYL.

Belongs to the ABC transporter superfamily. ABCG family. PDR (TC 3.A.1.205) subfamily.

It is found in the membrane. The sequence is that of ABC transporter G family member 11 (abcG11) from Dictyostelium discoideum (Social amoeba).